We begin with the raw amino-acid sequence, 34 residues long: Mu-theraphotoxin-Df1a (34 aa).

Intrachain disulfides connect Cys2–Cys16, Cys9–Cys21, and Cys15–Cys28. Phe34 carries the phenylalanine amide modification.

The protein belongs to the neurotoxin 10 (Hwtx-1) family. 54 (ProTx-1) subfamily. Post-translationally, C-terminal amidation is important for the high potency of the toxin. Expressed by the venom gland.

The protein localises to the secreted. Functionally, inhibits sodium channel Nav1.7/SCN9A with high potency (IC(50)=117 nM) and Nav1.2/SCN2A, Nav1.3/SCN3A, Nav1.6/SCN8A and Nav1.5/SCN5 with weaker potency. Also inhibits voltage-gated calcium channel Cav3.1/CACNA1G, Cav3.2/CACNA1H and Cav3.3/CACNA1I. This is Mu-theraphotoxin-Df1a from Davus fasciatus (Costa Rican tiger rump).